The chain runs to 277 residues: S-formylglutathione hydrolase FrmB (277 aa).

Residues Ser145, Asp221, and His254 each act as charge relay system in the active site.

The protein belongs to the esterase D family.

It catalyses the reaction S-formylglutathione + H2O = formate + glutathione + H(+). Serine hydrolase involved in the detoxification of formaldehyde. Hydrolyzes S-formylglutathione to glutathione and formate. The protein is S-formylglutathione hydrolase FrmB (frmB) of Escherichia coli O139:H28 (strain E24377A / ETEC).